Here is a 242-residue protein sequence, read N- to C-terminus: UPF0246 protein SPN23F15130 (242 aa).

The protein belongs to the UPF0246 family.

This is UPF0246 protein SPN23F15130 from Streptococcus pneumoniae (strain ATCC 700669 / Spain 23F-1).